A 284-amino-acid chain; its full sequence is 4-diphosphocytidyl-2-C-methyl-D-erythritol kinase (284 aa).

Lys-9 is an active-site residue. Pro-92–Ser-102 lines the ATP pocket. Asp-134 is a catalytic residue.

It belongs to the GHMP kinase family. IspE subfamily.

The catalysed reaction is 4-CDP-2-C-methyl-D-erythritol + ATP = 4-CDP-2-C-methyl-D-erythritol 2-phosphate + ADP + H(+). Its pathway is isoprenoid biosynthesis; isopentenyl diphosphate biosynthesis via DXP pathway; isopentenyl diphosphate from 1-deoxy-D-xylulose 5-phosphate: step 3/6. Catalyzes the phosphorylation of the position 2 hydroxy group of 4-diphosphocytidyl-2C-methyl-D-erythritol. The sequence is that of 4-diphosphocytidyl-2-C-methyl-D-erythritol kinase from Stutzerimonas stutzeri (strain A1501) (Pseudomonas stutzeri).